We begin with the raw amino-acid sequence, 102 residues long: Phosphoribosyl-ATP pyrophosphatase (102 aa).

Belongs to the PRA-PH family.

Its subcellular location is the cytoplasm. The catalysed reaction is 1-(5-phospho-beta-D-ribosyl)-ATP + H2O = 1-(5-phospho-beta-D-ribosyl)-5'-AMP + diphosphate + H(+). It functions in the pathway amino-acid biosynthesis; L-histidine biosynthesis; L-histidine from 5-phospho-alpha-D-ribose 1-diphosphate: step 2/9. This chain is Phosphoribosyl-ATP pyrophosphatase, found in Ignicoccus hospitalis (strain KIN4/I / DSM 18386 / JCM 14125).